The primary structure comprises 290 residues: 4-hydroxy-tetrahydrodipicolinate synthase (290 aa).

T45 serves as a coordination point for pyruvate. Y133 functions as the Proton donor/acceptor in the catalytic mechanism. K161 functions as the Schiff-base intermediate with substrate in the catalytic mechanism. Residue I202 participates in pyruvate binding.

The protein belongs to the DapA family. In terms of assembly, homotetramer; dimer of dimers.

It localises to the cytoplasm. It carries out the reaction L-aspartate 4-semialdehyde + pyruvate = (2S,4S)-4-hydroxy-2,3,4,5-tetrahydrodipicolinate + H2O + H(+). The protein operates within amino-acid biosynthesis; L-lysine biosynthesis via DAP pathway; (S)-tetrahydrodipicolinate from L-aspartate: step 3/4. Functionally, catalyzes the condensation of (S)-aspartate-beta-semialdehyde [(S)-ASA] and pyruvate to 4-hydroxy-tetrahydrodipicolinate (HTPA). The sequence is that of 4-hydroxy-tetrahydrodipicolinate synthase from Alkalilimnicola ehrlichii (strain ATCC BAA-1101 / DSM 17681 / MLHE-1).